We begin with the raw amino-acid sequence, 328 residues long: Lactamase-like protein nscB (328 aa).

Zn(2+)-binding residues include histidine 97, histidine 99, aspartate 101, and histidine 102. Aspartate 101 functions as the Proton donor/acceptor in the catalytic mechanism.

Belongs to the metallo-beta-lactamase superfamily. Zn(2+) serves as cofactor.

Its pathway is secondary metabolite biosynthesis. Lactamase-like protein; part of the gene cluster that mediates the biosynthesis of neosartoricin, a prenylated anthracenone that exhibits T-cell antiproliferative activity, suggestive of a physiological role as an immunosuppressive agent. The non-reducing polyketide synthase nscA probably synthesizes and cyclizes the decaketide backbone. The hydrolase nscB then mediates the product release through hydrolysis followed by spontaneous decarboxylation. The prenyltransferase nscD catalyzes the addition of the dimethylallyl group to the aromatic C5. The FAD-dependent monooxygenase nscC is then responsible for the stereospecific hydroxylation at C2. There is no gene encoding O-acetyltransferase in the nsc gene cluster; thus, the last step of 2-O-acetylation leading to neosartoricin may be catalyzed by an unidentified O-acetyltransferase. The protein is Lactamase-like protein nscB of Neosartorya fischeri (strain ATCC 1020 / DSM 3700 / CBS 544.65 / FGSC A1164 / JCM 1740 / NRRL 181 / WB 181) (Aspergillus fischerianus).